The following is a 464-amino-acid chain: MTVRQKKTWSDRFEGSLHPAIVEFNASITFDIELIEYDLTGSIAHAKMLAKTGIISEAEAQKLVNGLEQIRQEYRDGNFTPGIDQEDVHFAVERRLTELVGDVGKKLHTARSRNDQVGTDIRLYLRDQIQQIRSQIQAFQQVLLTHAQENVETLIPGYTHLQRAQPISLAHHLLAYFQMAQRDWERLGEIYQRTNVSPLGCGALAGTTFPIDRHYSAELLGFEEVYGNSLDGVSDRDFAIEFLNAASLIMVHLSRLSEEMILWASQEFGFISLTDSCATGSSIMPQKKNPDVPELVRGKAGRVFGHLQGMLVLMKGLPLAYNKDLQEDKEAIFDGVKTVKGCLEAMTVLLGEGITFRKERLSEAVAEDFSNATDVADYLAAKGVPFREAYNLVGKVVKTSLASGKLLKDLTLEEWQALHPNFEADIYDAIAPKQVVAARNSYGGTGFEQIYQAVERAKQQLELS.

The protein belongs to the lyase 1 family. Argininosuccinate lyase subfamily.

Its subcellular location is the cytoplasm. The enzyme catalyses 2-(N(omega)-L-arginino)succinate = fumarate + L-arginine. It participates in amino-acid biosynthesis; L-arginine biosynthesis; L-arginine from L-ornithine and carbamoyl phosphate: step 3/3. This Crocosphaera subtropica (strain ATCC 51142 / BH68) (Cyanothece sp. (strain ATCC 51142)) protein is Argininosuccinate lyase.